A 368-amino-acid polypeptide reads, in one-letter code: MHVVRLSIHRLRRFHTVELHPSSTLNLLTGDNGAGKTSVLEALHLMAYGRSFRGRVRDGLIQQGANDLEVFVEWKEGNGAAGERTRRAGLRHRGQEWTGRLDGEDVAQLGALCAALAVVTFEPGSHVLISGGGEPRRRFLDWGLFHVEPDFLTMWRRYARALKQRNALLKQGAQPRMLDAWDHELAESGESLTSRRTRYLERLQERLVPVADAIAPALGLSALTFAPGWKRHEVSLADALLLARERDRQNGYTSQGPHRADWVPSFQALPGRDALSRGQAKLTALACLLAQAEDFAYERGEWPVIALDDLGSELDRHHQGRVLQRLASAPAQVLITATETPPGLADAGALLQQFHVEHGHITRQAAAH.

ATP is bound at residue 30–37 (GDNGAGKT).

It belongs to the RecF family.

The protein resides in the cytoplasm. Functionally, the RecF protein is involved in DNA metabolism; it is required for DNA replication and normal SOS inducibility. RecF binds preferentially to single-stranded, linear DNA. It also seems to bind ATP. The polypeptide is DNA replication and repair protein RecF (Xanthomonas euvesicatoria pv. vesicatoria (strain 85-10) (Xanthomonas campestris pv. vesicatoria)).